A 159-amino-acid chain; its full sequence is Phosphopantetheine adenylyltransferase (159 aa).

Substrate is bound at residue Thr-10. Residues 10–11 (TF) and His-18 contribute to the ATP site. Positions 42, 74, and 88 each coordinate substrate. ATP is bound by residues 89–91 (GLR), Glu-99, and 124–130 (WSFISSS).

This sequence belongs to the bacterial CoaD family. Homohexamer. Mg(2+) serves as cofactor.

The protein localises to the cytoplasm. It carries out the reaction (R)-4'-phosphopantetheine + ATP + H(+) = 3'-dephospho-CoA + diphosphate. The protein operates within cofactor biosynthesis; coenzyme A biosynthesis; CoA from (R)-pantothenate: step 4/5. In terms of biological role, reversibly transfers an adenylyl group from ATP to 4'-phosphopantetheine, yielding dephospho-CoA (dPCoA) and pyrophosphate. This chain is Phosphopantetheine adenylyltransferase, found in Yersinia pestis.